Here is a 369-residue protein sequence, read N- to C-terminus: MISPQEKQDKVIRATDLDALSCRYSANNKSYFSKPDPFIDSLISSYKMHLPLCTGYTNMSANRTLRSVFNEQKLPLINRGTYLRTESIDVITQEFIKEFKKCQVISLGGGSDTRCFRILEEHGEDVRYCEIDFHESVKIKKLAIINDKKLADIVKYDEESQSITSKEEFARLESNIHTENYHLIGYDLRELTGALDSGAILEYVDTSLPTLILSECVLCYLNPKENERIIEFWKNAFASKALLALLIYEPMSLNDAFGTTMTHNLSNRGINLLTFNEYPNLEARYKFLSEKCQSSNVKLTDMSNVGGYDSDNTTKAWINSKDLARINRLELVDEIEEIRLLLKHYCLCYCEFSHSPSLKTINKWKWILE.

Residues Arg84, Gly108, Asp132, Asp187–Leu188, and Glu215 contribute to the S-adenosyl-L-methionine site.

The protein belongs to the methyltransferase superfamily. LCMT family.

It carries out the reaction [phosphatase 2A protein]-C-terminal L-leucine + S-adenosyl-L-methionine = [phosphatase 2A protein]-C-terminal L-leucine methyl ester + S-adenosyl-L-homocysteine. Functionally, methylates the carboxyl group of the C-terminal leucine residue of protein phosphatase 2A catalytic subunits to form alpha-leucine ester residues. The protein is Leucine carboxyl methyltransferase 1 (PPM1) of Debaryomyces hansenii (strain ATCC 36239 / CBS 767 / BCRC 21394 / JCM 1990 / NBRC 0083 / IGC 2968) (Yeast).